The primary structure comprises 72 residues: Translation initiation factor IF-1 (72 aa).

The S1-like domain occupies 1-72; that stretch reads MSKDDVIQMQ…SRARIVFRAK (72 aa).

The protein belongs to the IF-1 family. In terms of assembly, component of the 30S ribosomal translation pre-initiation complex which assembles on the 30S ribosome in the order IF-2 and IF-3, IF-1 and N-formylmethionyl-tRNA(fMet); mRNA recruitment can occur at any time during PIC assembly.

It localises to the cytoplasm. In terms of biological role, one of the essential components for the initiation of protein synthesis. Stabilizes the binding of IF-2 and IF-3 on the 30S subunit to which N-formylmethionyl-tRNA(fMet) subsequently binds. Helps modulate mRNA selection, yielding the 30S pre-initiation complex (PIC). Upon addition of the 50S ribosomal subunit IF-1, IF-2 and IF-3 are released leaving the mature 70S translation initiation complex. The sequence is that of Translation initiation factor IF-1 from Albidiferax ferrireducens (strain ATCC BAA-621 / DSM 15236 / T118) (Rhodoferax ferrireducens).